The sequence spans 188 residues: UPF0301 protein XF_2228 (188 aa).

This sequence belongs to the UPF0301 (AlgH) family.

The sequence is that of UPF0301 protein XF_2228 from Xylella fastidiosa (strain 9a5c).